Consider the following 417-residue polypeptide: Tyrosine--tRNA ligase (417 aa).

Residue Tyr39 participates in L-tyrosine binding. The 'HIGH' region motif lies at 44–53; it reads PTAASLHAGG. 2 residues coordinate L-tyrosine: Tyr176 and Gln180. A 'KMSKS' region motif is present at residues 236-240; sequence KMGKS. Lys239 is an ATP binding site. The 68-residue stretch at 350–417 folds into the S4 RNA-binding domain; the sequence is LGLLTLLVRA…KKKHLLVRPV (68 aa).

It belongs to the class-I aminoacyl-tRNA synthetase family. TyrS type 1 subfamily. In terms of assembly, homodimer.

It localises to the cytoplasm. It carries out the reaction tRNA(Tyr) + L-tyrosine + ATP = L-tyrosyl-tRNA(Tyr) + AMP + diphosphate + H(+). Functionally, catalyzes the attachment of tyrosine to tRNA(Tyr) in a two-step reaction: tyrosine is first activated by ATP to form Tyr-AMP and then transferred to the acceptor end of tRNA(Tyr). This chain is Tyrosine--tRNA ligase, found in Rhizobium meliloti (strain 1021) (Ensifer meliloti).